A 429-amino-acid chain; its full sequence is 46 kDa membrane protein (429 aa).

9 consecutive transmembrane segments (helical) span residues 26 to 46, 51 to 71, 99 to 119, 173 to 193, 224 to 244, 279 to 299, 315 to 335, 360 to 380, and 407 to 427; these read AALT…EDVF, TGID…VSVL, LVLV…VLLI, FLIH…ALLP, LLIK…AHPV, TLLF…TDVV, LLTV…IDNI, ILWW…AVGA, and IAVT…RYLV.

It belongs to the CitM (TC 2.A.11) transporter family.

Its subcellular location is the cell membrane. The polypeptide is 46 kDa membrane protein (ag45) (Mycobacterium leprae (strain TN)).